The chain runs to 285 residues: Urease accessory protein UreD (285 aa).

The protein belongs to the UreD family. UreD, UreF and UreG form a complex that acts as a GTP-hydrolysis-dependent molecular chaperone, activating the urease apoprotein by helping to assemble the nickel containing metallocenter of UreC. The UreE protein probably delivers the nickel.

Its subcellular location is the cytoplasm. Its function is as follows. Required for maturation of urease via the functional incorporation of the urease nickel metallocenter. In Cytophaga hutchinsonii (strain ATCC 33406 / DSM 1761 / CIP 103989 / NBRC 15051 / NCIMB 9469 / D465), this protein is Urease accessory protein UreD.